A 1621-amino-acid chain; its full sequence is Nestin (1621 aa).

The residue at position 1 (Met-1) is an N-acetylmethionine. Residues 1 to 7 (MEGCMGE) form a head region. The tract at residues 8–43 (ESFQMWELNRRLEAYLARVKALEEQNELLSAELGGL) is coil 1A. The region spanning 8 to 313 (ESFQMWELNR…TLLEAENSRL (306 aa)) is the IF rod domain. The segment at 44–55 (RAQSADTSWRAH) is linker 1. The segment at 56 to 151 (ADDELAALRA…VAHEEERVGL (96 aa)) is coil 1B. Residues 152–173 (NAQAACAPRCPAPPRGPPAPAP) are linker 12. Residues 174-192 (EVEELARRLGEAWRGAVRG) are coil 2A. Residues 193–195 (YQE) are linker 2. The coil 2B stretch occupies residues 196-313 (RVAHMETSLG…TLLEAENSRL (118 aa)). At Ser-311 the chain carries Phosphoserine. The tail stretch occupies residues 314–1621 (QTPGGGSKTS…DRESWSSGED (1308 aa)). Position 315 is a phosphothreonine (Thr-315). Ser-325 carries the phosphoserine modification. Thr-338 carries the phosphothreonine modification. Phosphoserine is present on residues Ser-355 and Ser-358. Residue Thr-388 is modified to Phosphothreonine. Residues Ser-398, Ser-471, Ser-476, Ser-548, Ser-564, Ser-578, Ser-588, Ser-638, Ser-680, Ser-702, Ser-746, and Ser-768 each carry the phosphoserine modification. A disordered region spans residues 439-490 (SVLPGPEEPGGQRQEASTGQSPEDHASLAPPLSPDHSSLEAKDGESGGSRVF). The disordered stretch occupies residues 670-788 (LEKENQEPLR…PPEKVDLEPL (119 aa)). Basic and acidic residues-rich tracts occupy residues 687-725 (EALRPLTKENQEPLRSLEDENKEAFRSLEKENQEPLKTL), 736-770 (LETENHKSLRSLEEQDQETLRTLEKETQQRRRSLG), and 779-788 (PPEKVDLEPL). Ser-790 bears the Phosphoserine mark. Lys-811 participates in a covalent cross-link: Glycyl lysine isopeptide (Lys-Gly) (interchain with G-Cter in SUMO1); alternate. Residue Lys-811 forms a Glycyl lysine isopeptide (Lys-Gly) (interchain with G-Cter in SUMO2); alternate linkage. Ser-820, Ser-831, and Ser-842 each carry phosphoserine. Thr-851 carries the post-translational modification Phosphothreonine. 4 positions are modified to phosphoserine: Ser-894, Ser-905, Ser-913, and Ser-934. The interval 895–1593 (LGAWNLENLR…GSALKTSWAG (699 aa)) is disordered. Basic and acidic residues-rich tracts occupy residues 904–936 (RSPEEVDKESQRNLEEEENLGKGEYQESLRSLE), 949–960 (QRWEDTVEKDQE), 980–994 (LNLREQDGFTGKEEV), and 1012–1024 (GHPESPEPKEQRG). Phosphoserine is present on Ser-1016. Residues 1085–1098 (GSEPAMGESAAGAE) show a composition bias toward low complexity. Over residues 1099 to 1110 (PGPGQGVGGLGD) the composition is skewed to gly residues. Basic and acidic residues-rich tracts occupy residues 1129–1145 (LEAKRVQGLEGPRKDLE) and 1159–1184 (GKSRDPWEPPREGREESEAEAPRGAE). A phosphoserine mark is found at Ser-1261, Ser-1282, Ser-1286, Ser-1310, Ser-1347, Ser-1409, Ser-1418, and Ser-1452. The span at 1275 to 1292 (PQEEGEESREESEEDELG) shows a compositional bias: acidic residues. Over residues 1409 to 1428 (SDGFADEEESGEEGEEDQEE) the composition is skewed to acidic residues. Composition is skewed to low complexity over residues 1440–1453 (GSSVGSLQALSSSQ) and 1460–1470 (SDSVSVSVPWD). The span at 1486 to 1495 (ETESQDSAEP) shows a compositional bias: polar residues. Phosphoserine is present on residues Ser-1496, Ser-1498, Ser-1577, Ser-1617, and Ser-1618.

Belongs to the intermediate filament family. Forms homodimers and homotetramers in vitro. In mixtures with other intermediate filament proteins such as vimentin and alpha-internexin, tis protein preferentially forms heterodimers which can assemble to form intermediate filaments if nestin does not exceed 25%. Interacts with FHOD3. In terms of processing, constitutively phosphorylated. This increases during mitosis when the cytoplasmic intermediate filament network is reorganized. In terms of tissue distribution, CNS stem cells.

Its function is as follows. Required for brain and eye development. Promotes the disassembly of phosphorylated vimentin intermediate filaments (IF) during mitosis and may play a role in the trafficking and distribution of IF proteins and other cellular factors to daughter cells during progenitor cell division. Required for survival, renewal and mitogen-stimulated proliferation of neural progenitor cells. The polypeptide is Nestin (NES) (Homo sapiens (Human)).